Reading from the N-terminus, the 308-residue chain is Barttin (308 aa).

Topologically, residues 1 to 5 (MADEK) are cytoplasmic. Residues 1–72 (MADEKTFRIG…VPADSDFQGM (72 aa)) are regulates channel membrane trafficking and anion conductance. Residues 6–26 (TFRIGFIVLGLFLLSLGTFLM) traverse the membrane as a helical segment. The Extracellular portion of the chain corresponds to 27–32 (SHDRPQ). Residues 33-53 (VYGTFYAMGSIMVIGGVLWSM) form a helical membrane-spanning segment. S-palmitoyl cysteine attachment occurs at residues cysteine 54 and cysteine 56. Residues 54-308 (CQCYPKITFV…ELGFEPDVQG (255 aa)) lie on the Cytoplasmic side of the membrane. Serine 79 and serine 107 each carry phosphoserine. 2 disordered regions span residues 127–149 (PLLA…HSAQ) and 162–308 (LDEK…DVQG). Over residues 162 to 171 (LDEKEGEKSR) the composition is skewed to basic and acidic residues. The span at 172–183 (SQSSPPACSQGS) shows a compositional bias: polar residues. The span at 274–283 (EEPEQEEEDL) shows a compositional bias: acidic residues. Serine 290 carries the post-translational modification Phosphoserine.

Interacts with CLCNK channels. Forms heteromers with CLCNKA in the thin ascending limb of Henle and with CLCNKB in the thick ascending limb and more distal segments. In terms of processing, palmitoylation is necessary for activation of plasma membrane-inserted CLC-K/barttin channels. In terms of tissue distribution, expressed along the distal nephron.

It localises to the basolateral cell membrane. Functionally, regulatory subunit of anion-selective CLCNKA:BSND and CLCNKB:BSND heteromeric channels involved in basolateral chloride conductance along the nephron to achieve urine concentration and maintain systemic acid-base homeostasis, and in the stria vascularis of the inner ear to establish the endocochlear potential necessary for normal hearing. Most likely acts as a chaperone that allosterically regulates proper sorting of CLCNKA:BSND and CLCNKB:BSND channels at the basolateral plasma membrane domain and functional switch to ion conducting state. Mediates constitutive opening of channel common gates. This is Barttin from Rattus norvegicus (Rat).